The chain runs to 843 residues: Protein P (843 aa).

The segment at 1–177 (MPLSYPHFRK…FCGSPYSWEQ (177 aa)) is terminal protein domain (TP). A spacer region spans residues 178-346 (ELQHGSTSIN…YCLSHIINLL (169 aa)). 2 disordered regions span residues 202 to 221 (SGIL…FQQS) and 285 to 310 (TNPS…VPPG). Positions 347–690 (EDWGPCYEHG…YMNLYPVARQ (344 aa)) are polymerase/reverse transcriptase domain (RT). The region spanning 357–600 (QHHIRTPRTP…YTLNFMGYVI (244 aa)) is the Reverse transcriptase domain. Mg(2+) is bound by residues Asp-429, Asp-551, and Asp-552.

This sequence belongs to the hepadnaviridae P protein family.

The enzyme catalyses DNA(n) + a 2'-deoxyribonucleoside 5'-triphosphate = DNA(n+1) + diphosphate. It catalyses the reaction Endonucleolytic cleavage to 5'-phosphomonoester.. With respect to regulation, activated by host HSP70 and HSP40 in vitro to be able to bind the epsilon loop of the pgRNA. Because deletion of the RNase H region renders the protein partly chaperone-independent, the chaperones may be needed indirectly to relieve occlusion of the RNA-binding site by this domain. Inhibited by several reverse-transcriptase inhibitors: Lamivudine, Adefovir and Entecavir. Its function is as follows. Multifunctional enzyme that converts the viral RNA genome into dsDNA in viral cytoplasmic capsids. This enzyme displays a DNA polymerase activity that can copy either DNA or RNA templates, and a ribonuclease H (RNase H) activity that cleaves the RNA strand of RNA-DNA heteroduplexes in a partially processive 3'- to 5'-endonucleasic mode. Neo-synthesized pregenomic RNA (pgRNA) are encapsidated together with the P protein, and reverse-transcribed inside the nucleocapsid. Initiation of reverse-transcription occurs first by binding the epsilon loop on the pgRNA genome, and is initiated by protein priming, thereby the 5'-end of (-)DNA is covalently linked to P protein. Partial (+)DNA is synthesized from the (-)DNA template and generates the relaxed circular DNA (RC-DNA) genome. After budding and infection, the RC-DNA migrates in the nucleus, and is converted into a plasmid-like covalently closed circular DNA (cccDNA). The activity of P protein does not seem to be necessary for cccDNA generation, and is presumably released from (+)DNA by host nuclear DNA repair machinery. The polypeptide is Protein P (Hepatitis B virus genotype F1 (isolate Argentina/sa11/2000) (HBV-F)).